The sequence spans 641 residues: Hemagglutinin-esterase-fusion glycoprotein (641 aa).

A fusion domain-1 region spans residues 1 to 26 (EKIKICLQKQVNSSFSLHNGFGGNLY). Topologically, residues 1–616 (EKIKICLQKQ…QSDPFYWGSS (616 aa)) are extracellular. 7 disulfides stabilise this stretch: Cys-6–Cys-569, Cys-106–Cys-151, Cys-126–Cys-174, Cys-196–Cys-238, Cys-215–Cys-302, Cys-223–Cys-275, and Cys-332–Cys-338. N-linked (GlcNAc...) asparagine; by host glycans are attached at residues Asn-12 and Asn-47. The interval 27–137 (ATEEKRMFEL…RKNWTDIKLN (111 aa)) is esterase domain-1. Ser-57 functions as the Nucleophile in the catalytic mechanism. Residue Asn-130 is glycosylated (N-linked (GlcNAc...) asparagine; by host). Positions 137 to 296 (NFQKNIYELA…VRSSPRFLLM (160 aa)) are N-acetyl-9-O-acetylneuraminic acid binding. Residues 297 to 351 (PERSYCFDMKEKGPVTAVQSIWGKDRKSDYAVDQACLSTPGCMLIQKQKPYTGEA) are esterase domain-2. Catalysis depends on charge relay system residues Asp-352 and His-355. Residues 352–637 (DDHHGDQEMR…AALVISGIAI (286 aa)) form a fusion domain-2 region. A glycan (N-linked (GlcNAc...) asparagine; by host) is linked at Asn-381. A helical transmembrane segment spans residues 617–637 (LGLAITAAISLAALVISGIAI). The Cytoplasmic portion of the chain corresponds to 638-641 (CRTK).

The protein belongs to the influenza type C/coronaviruses hemagglutinin-esterase family. As to quaternary structure, homotrimer of disulfide-linked HEF1-HEF2. In terms of processing, in natural infection, inactive HEF is matured into HEF1 and HEF2 outside the cell by one or more trypsin-like, arginine-specific endoprotease.

It localises to the virion membrane. The protein localises to the host cell membrane. It catalyses the reaction N-acetyl-9-O-acetylneuraminate + H2O = N-acetylneuraminate + acetate + H(+). It carries out the reaction N-acetyl-4-O-acetylneuraminate + H2O = N-acetylneuraminate + acetate + H(+). In terms of biological role, binds to the N-acetyl-9-O-acetylneuraminic acid residues on the cell surface, bringing about the attachment of the virus particle to the cell. Plays a major role in the determination of host range restriction and virulence. Class I viral fusion protein. Responsible for penetration of the virus into the cell cytoplasm by mediating the fusion of the membrane of the endocytosed virus particle with the endosomal membrane. Low pH in endosomes induce an irreversible conformational change in HEF2, releasing the fusion hydrophobic peptide. Several trimers are required to form a competent fusion pore. Displays a receptor-destroying activity which is a neuraminidate-O-acetyl esterase. This activity cleaves off any receptor on the cell surface, which would otherwise prevent virions release. These cleavages prevent self-aggregation and ensure the efficient spread of the progeny virus from cell to cell. This Influenza C virus (strain C/Kyoto/41/1982) protein is Hemagglutinin-esterase-fusion glycoprotein (HE).